The sequence spans 169 residues: Large ribosomal subunit protein uL10 (169 aa).

Belongs to the universal ribosomal protein uL10 family. Part of the ribosomal stalk of the 50S ribosomal subunit. The N-terminus interacts with L11 and the large rRNA to form the base of the stalk. The C-terminus forms an elongated spine to which L12 dimers bind in a sequential fashion forming a multimeric L10(L12)X complex.

Forms part of the ribosomal stalk, playing a central role in the interaction of the ribosome with GTP-bound translation factors. This Onion yellows phytoplasma (strain OY-M) protein is Large ribosomal subunit protein uL10.